The following is a 289-amino-acid chain: Light-independent protochlorophyllide reductase iron-sulfur ATP-binding protein (289 aa).

ATP is bound by residues 10–15 (GIGKST) and Lys-39. Position 14 (Ser-14) interacts with Mg(2+). [4Fe-4S] cluster is bound by residues Cys-95 and Cys-129. 180–181 (NR) serves as a coordination point for ATP.

This sequence belongs to the NifH/BchL/ChlL family. In terms of assembly, homodimer. Protochlorophyllide reductase is composed of three subunits; ChlL, ChlN and ChlB. It depends on [4Fe-4S] cluster as a cofactor.

The protein localises to the plastid. It is found in the chloroplast. The enzyme catalyses chlorophyllide a + oxidized 2[4Fe-4S]-[ferredoxin] + 2 ADP + 2 phosphate = protochlorophyllide a + reduced 2[4Fe-4S]-[ferredoxin] + 2 ATP + 2 H2O. It participates in porphyrin-containing compound metabolism; chlorophyll biosynthesis (light-independent). Functionally, component of the dark-operative protochlorophyllide reductase (DPOR) that uses Mg-ATP and reduced ferredoxin to reduce ring D of protochlorophyllide (Pchlide) to form chlorophyllide a (Chlide). This reaction is light-independent. The L component serves as a unique electron donor to the NB-component of the complex, and binds Mg-ATP. In Marchantia polymorpha (Common liverwort), this protein is Light-independent protochlorophyllide reductase iron-sulfur ATP-binding protein.